Here is a 118-residue protein sequence, read N- to C-terminus: Large ribosomal subunit protein bL20 (118 aa).

Belongs to the bacterial ribosomal protein bL20 family.

In terms of biological role, binds directly to 23S ribosomal RNA and is necessary for the in vitro assembly process of the 50S ribosomal subunit. It is not involved in the protein synthesizing functions of that subunit. This chain is Large ribosomal subunit protein bL20, found in Serratia proteamaculans (strain 568).